Here is a 192-residue protein sequence, read N- to C-terminus: Adenylate kinase (192 aa).

ATP is bound at residue 10–15; sequence GAGKGT. The segment at 30–59 is NMP; that stretch reads STGDMLRAAVAQATEVGKRAKAVMDAGQLV. AMP is bound by residues threonine 31, arginine 36, 57–59, 85–88, and glutamine 92; these read QLV and GYPR. Residues 126-142 are LID; it reads NRVAETVAAGGTVRSDD. Arginine 127 contacts ATP. Residues arginine 139 and arginine 150 each contribute to the AMP site. Alanine 178 contacts ATP.

Belongs to the adenylate kinase family. In terms of assembly, monomer.

Its subcellular location is the cytoplasm. The enzyme catalyses AMP + ATP = 2 ADP. It participates in purine metabolism; AMP biosynthesis via salvage pathway; AMP from ADP: step 1/1. In terms of biological role, catalyzes the reversible transfer of the terminal phosphate group between ATP and AMP. Plays an important role in cellular energy homeostasis and in adenine nucleotide metabolism. The polypeptide is Adenylate kinase (Sinorhizobium medicae (strain WSM419) (Ensifer medicae)).